We begin with the raw amino-acid sequence, 752 residues long: MCEPSGSDDAMVHASEMVDGDEMIHGNEMVVHDSVMIDGNEMVQENVMVHGSGEMVQGSEMVHNNEIIQVNDMIQVNEMVNGDKMAHGHELVGVELTTPTASRRRRKKSVVWEHFTIEEMPGGVSRASCNLCKQTFAYSCGSKISGTSHLKRHITLASCPMLKNEDMKLSLPLATVTNNDGEGCAERVAKRHYRSTGYANAMFDQDRTCSNLAKMIILHDYPLHIVEQRGFTAFIGSLQPRFRVIDVDTIEGQVHSVYQKERENLMHVFSTVPGRISLTVRLWATSQTLGYISLAAQFIDTEWRVHRRMVNFMMVSSPHSENSLSEAISTSLSDWNMKDKLFTITLDNDPSSHDIYSANMINYLSNKKDNIMIKGQLFVVRCYAHILNTVAQDVIASVHSVIYHIRESIKFIKASSVHEDKFAEIALQLEIPSAKTLCLDVTTQWNTTYLMLLAALDYQQVFASLETCDGDYNEAPSTEDWKKVEAACSYLSLLYDSAHNIMAAPNPTSNIFFHEAWKLQSELSNAIAHEDPIFRSTAKIMHERFDKYWKDCNLVLAIAVVMDPRFKMKLVEFSYSKIHSVEAAKYVKVVDDAIHELYSEYATQGEANRDAHVTDNSAAVTPPNGDELLDFDIYLSEIATSQPSISELEQYLEEALMPRIQDFEILEWWKLNTIKFPTLSKMARDVLAIPMSMVSSGSSIFSATATGSQMLDDYRSSLRPETVEALFCAKDWLQYPPATTEAPSTALVKMEN.

A BED-type zinc finger spans residues 106–166 (RKKSVVWEHF…ASCPMLKNED (61 aa)). The Zn(2+) site is built by Cys-129, Cys-132, His-153, and Cys-159. The HATC (Hobo-Ac-Tam3) domain stretch occupies residues 647–733 (ELEQYLEEAL…EALFCAKDWL (87 aa)).

As to quaternary structure, homodimer.

Its subcellular location is the nucleus. Its function is as follows. Transposase-like protein that is essential for plant growth and development. May regulate global gene expression by recruiting other cellular factors. The chain is Zinc finger BED domain-containing protein RICESLEEPER 3 from Oryza sativa subsp. japonica (Rice).